Consider the following 299-residue polypeptide: Probable lipid kinase YegS-like (299 aa).

Residues 2–133 (ATFPASLLIL…IDIAQVNDKT (132 aa)) form the DAGKc domain. ATP is bound by residues Thr-40, 66-72 (GDGTINE), and Thr-95. Residues Leu-215, Asp-218, and Leu-220 each coordinate Mg(2+). Residue Glu-271 is the Proton acceptor of the active site.

Belongs to the diacylglycerol/lipid kinase family. YegS lipid kinase subfamily. The cofactor is Mg(2+). Ca(2+) serves as cofactor.

The protein resides in the cytoplasm. Functionally, probably phosphorylates lipids; the in vivo substrate is unknown. In Citrobacter koseri (strain ATCC BAA-895 / CDC 4225-83 / SGSC4696), this protein is Probable lipid kinase YegS-like.